A 158-amino-acid chain; its full sequence is Transcription elongation factor GreA (158 aa).

It belongs to the GreA/GreB family.

Necessary for efficient RNA polymerase transcription elongation past template-encoded arresting sites. The arresting sites in DNA have the property of trapping a certain fraction of elongating RNA polymerases that pass through, resulting in locked ternary complexes. Cleavage of the nascent transcript by cleavage factors such as GreA or GreB allows the resumption of elongation from the new 3'terminus. GreA releases sequences of 2 to 3 nucleotides. The chain is Transcription elongation factor GreA from Zymomonas mobilis subsp. mobilis (strain ATCC 31821 / ZM4 / CP4).